Here is a 637-residue protein sequence, read N- to C-terminus: Sodium-dependent proline transporter (637 aa).

Over 1-45 (MKKLQEAHLRKPITPDLLMTPSDQGDVDLDVDFAADRGNWTGKLD) the chain is Cytoplasmic. Thr-20 is subject to Phosphothreonine. Phosphoserine is present on Ser-22. A run of 3 helical transmembrane segments spans residues 46–66 (FLLS…FPYR), 74–93 (AFLV…LFFL), and 117–137 (GAGA…NMII). Residues 138-214 (AYVLFYLFAS…QGIGRPGEIR (77 aa)) are Extracellular-facing. Asn-182 carries an N-linked (GlcNAc...) asparagine glycan. A run of 9 helical transmembrane segments spans residues 215-233 (WNLC…LCIL), 242-259 (VVYF…MLLV), 295-312 (IFYS…FASY), 324-345 (FIVT…FSVL), 378-397 (LPLS…TLGL), 425-443 (VFSG…ILTT), 459-479 (SFGL…VYGI), 500-519 (ACWL…YSIV), and 538-556 (LGIL…GMLV). Over 557 to 637 (AVLREEGSLW…IAEEEEESMM (81 aa)) the chain is Cytoplasmic. Phosphoserine occurs at positions 573 and 582. Position 588 is a phosphothreonine (Thr-588). A Phosphotyrosine modification is found at Tyr-591. A phosphoserine mark is found at Ser-598 and Ser-600.

This sequence belongs to the sodium:neurotransmitter symporter (SNF) (TC 2.A.22) family. SLC6A7 subfamily.

It localises to the synaptic cell membrane. The enzyme catalyses L-proline(out) + chloride(out) + 2 Na(+)(out) = L-proline(in) + chloride(in) + 2 Na(+)(in). The catalysed reaction is L-pipecolate(out) + chloride(out) + 2 Na(+)(out) = L-pipecolate(in) + chloride(in) + 2 Na(+)(in). Its function is as follows. Brain specific sodium (and chloride)-dependent proline transporter. Terminates the action of proline by its high affinity sodium-dependent reuptake into presynaptic terminals. This Mus musculus (Mouse) protein is Sodium-dependent proline transporter.